We begin with the raw amino-acid sequence, 127 residues long: Modulator protein MzrA (127 aa).

Over 1–10 the chain is Cytoplasmic; that stretch reads MQIPRMSLRQ. Residues 11–31 traverse the membrane as a helical segment; it reads LAWSGAVLLLVGTLLLAWSAV. The Periplasmic portion of the chain corresponds to 32 to 127; the sequence is RQQESTLAIR…RLRDNSHRFG (96 aa).

Belongs to the MzrA family. In terms of assembly, interacts with EnvZ.

Its subcellular location is the cell inner membrane. Modulates the activity of the EnvZ/OmpR two-component regulatory system, probably by directly modulating EnvZ enzymatic activity and increasing stability of phosphorylated OmpR. Links the two-component systems CpxA/CpxR and EnvZ/OmpR. The chain is Modulator protein MzrA from Escherichia coli (strain K12).